The following is a 25-amino-acid chain: Caerin 1.1 (25 aa).

Leu-25 bears the Leucine amide mark.

Expressed by the skin dorsal glands.

Its subcellular location is the secreted. Antibacterial peptide with wide spectrum of activity. Active against the Gram-positive bacteria B.cereus (MIC=50 ug/ml), E.faecalis (MIC=25 ug/ml), L.lactis (MIC=1.5 ug/ml), L.innocua (MIC=25 ug/ml), S.aureus (MIC=3 ug/ml), S.epidermidis (MIC=12 ug/ml) and S.uberis (MIC=12 ug/ml), and against the Gram-negative bacteria E.coli (MIC=100 ug/ml) and P.multocida (MIC=25 ug/ml). In Litoria peronii (Emerald spotted tree frog), this protein is Caerin 1.1.